The primary structure comprises 262 residues: MAVGKNKGLSKGGKKGVKKKVVDPFTRKDWYDVKAPSMFTTRQIGKTLVNRTQGTKIASEGLKGRVFEVSLADLQNDTDAERSYRKFRLIAEDVQARNVLTNFHGMDLTTDKLRSMVKKWQTLIEANVDVRTTDGYLLRVFCIGFTNKDQLSQRKTCYAQHTQVRQIRRKMVDNITSSISNSDLRVVVNKLIPDSIAKDIEKACQGIYPLHDVYIRKVKVLKKPRFELSKLLELHGDGKGSDEPGAKVSRPEAYEPPVQESV.

Residues 235-253 (HGDGKGSDEPGAKVSRPEA) show a composition bias toward basic and acidic residues. The interval 235 to 262 (HGDGKGSDEPGAKVSRPEAYEPPVQESV) is disordered.

This sequence belongs to the eukaryotic ribosomal protein eS1 family. Component of the small ribosomal subunit. Mature ribosomes consist of a small (40S) and a large (60S) subunit. The 40S subunit contains about 33 different proteins and 1 molecule of RNA (18S). The 60S subunit contains about 49 different proteins and 3 molecules of RNA (28S, 5.8S and 5S).

It localises to the cytoplasm. This is Small ribosomal subunit protein eS1 from Triatoma infestans (Assassin bug).